The sequence spans 315 residues: ATP synthase gamma chain (315 aa).

The protein belongs to the ATPase gamma chain family. F-type ATPases have 2 components, CF(1) - the catalytic core - and CF(0) - the membrane proton channel. CF(1) has five subunits: alpha(3), beta(3), gamma(1), delta(1), epsilon(1). CF(0) has three main subunits: a, b and c.

Its subcellular location is the cellular thylakoid membrane. Produces ATP from ADP in the presence of a proton gradient across the membrane. The gamma chain is believed to be important in regulating ATPase activity and the flow of protons through the CF(0) complex. This Synechococcus sp. (strain PCC 6716) protein is ATP synthase gamma chain.